Here is a 233-residue protein sequence, read N- to C-terminus: ATP-dependent Clp protease proteolytic subunit 2 (233 aa).

Serine 116 serves as the catalytic Nucleophile. Histidine 141 is an active-site residue. Residues glutamate 214 to alanine 233 are disordered.

It belongs to the peptidase S14 family. Fourteen ClpP subunits assemble into 2 heptameric rings which stack back to back to give a disk-like structure with a central cavity, resembling the structure of eukaryotic proteasomes.

Its subcellular location is the cytoplasm. The catalysed reaction is Hydrolysis of proteins to small peptides in the presence of ATP and magnesium. alpha-casein is the usual test substrate. In the absence of ATP, only oligopeptides shorter than five residues are hydrolyzed (such as succinyl-Leu-Tyr-|-NHMec, and Leu-Tyr-Leu-|-Tyr-Trp, in which cleavage of the -Tyr-|-Leu- and -Tyr-|-Trp bonds also occurs).. Functionally, cleaves peptides in various proteins in a process that requires ATP hydrolysis. Has a chymotrypsin-like activity. Plays a major role in the degradation of misfolded proteins. The protein is ATP-dependent Clp protease proteolytic subunit 2 of Salinibacter ruber (strain DSM 13855 / M31).